A 214-amino-acid chain; its full sequence is Transmembrane emp24 domain-containing protein p24beta3 (214 aa).

An N-terminal signal peptide occupies residues M1–S27. Topologically, residues L28–R178 are lumenal. Residues E35–V122 enclose the GOLD domain. Residues V140–Q158 are a coiled coil. Omega-N-methylated arginine occurs at positions 164 and 169. An N-linked (GlcNAc...) asparagine glycan is attached at N172. The chain crosses the membrane as a helical span at residues V179–L199. Over Y200 to V214 the chain is Cytoplasmic. The COPII vesicle coat-binding motif lies at L204–F205. Positions L204–V214 match the COPI vesicle coat-binding motif. Residues R213–V214 carry the Required for the export from the endoplasmic reticulum to the Golgi motif.

Belongs to the EMP24/GP25L family. As to quaternary structure, probably oligomerizes with other members of the EMP24/GP25L family. Associates with the COPI vesicle coat (coatomer). Associates with the COPII vesicle coat (coatomer).

It localises to the golgi apparatus. It is found in the cis-Golgi network membrane. The protein resides in the golgi stack membrane. Its function is as follows. Involved in vesicular protein trafficking. Mainly functions in the early secretory pathway but also in post-Golgi membranes. Thought to act as cargo receptor at the lumenal side for incorporation of secretory cargo molecules into transport vesicles and to be involved in vesicle coat formation at the cytoplasmic side. The sequence is that of Transmembrane emp24 domain-containing protein p24beta3 from Arabidopsis thaliana (Mouse-ear cress).